Here is a 383-residue protein sequence, read N- to C-terminus: Erythronate-4-phosphate dehydrogenase (383 aa).

S45 and T66 together coordinate substrate. D146 and T175 together coordinate NAD(+). R208 is a catalytic residue. An NAD(+)-binding site is contributed by D232. E237 is a catalytic residue. Catalysis depends on H254, which acts as the Proton donor. An NAD(+)-binding site is contributed by G257.

This sequence belongs to the D-isomer specific 2-hydroxyacid dehydrogenase family. PdxB subfamily. In terms of assembly, homodimer.

It is found in the cytoplasm. The enzyme catalyses 4-phospho-D-erythronate + NAD(+) = (R)-3-hydroxy-2-oxo-4-phosphooxybutanoate + NADH + H(+). It functions in the pathway cofactor biosynthesis; pyridoxine 5'-phosphate biosynthesis; pyridoxine 5'-phosphate from D-erythrose 4-phosphate: step 2/5. Catalyzes the oxidation of erythronate-4-phosphate to 3-hydroxy-2-oxo-4-phosphonooxybutanoate. The chain is Erythronate-4-phosphate dehydrogenase from Chromohalobacter salexigens (strain ATCC BAA-138 / DSM 3043 / CIP 106854 / NCIMB 13768 / 1H11).